Here is a 208-residue protein sequence, read N- to C-terminus: uncharacterized protein (208 aa).

It to E.coli YfjJ.

This is an uncharacterized protein from Escherichia coli (strain K12).